The following is a 321-amino-acid chain: Lipoyl synthase (321 aa).

C68, C73, C79, C94, C98, C101, and S308 together coordinate [4Fe-4S] cluster. Residues 80 to 297 (FNHGTATFMI…KEVALELGFT (218 aa)) enclose the Radical SAM core domain.

Belongs to the radical SAM superfamily. Lipoyl synthase family. [4Fe-4S] cluster is required as a cofactor.

The protein resides in the cytoplasm. The catalysed reaction is [[Fe-S] cluster scaffold protein carrying a second [4Fe-4S](2+) cluster] + N(6)-octanoyl-L-lysyl-[protein] + 2 oxidized [2Fe-2S]-[ferredoxin] + 2 S-adenosyl-L-methionine + 4 H(+) = [[Fe-S] cluster scaffold protein] + N(6)-[(R)-dihydrolipoyl]-L-lysyl-[protein] + 4 Fe(3+) + 2 hydrogen sulfide + 2 5'-deoxyadenosine + 2 L-methionine + 2 reduced [2Fe-2S]-[ferredoxin]. The protein operates within protein modification; protein lipoylation via endogenous pathway; protein N(6)-(lipoyl)lysine from octanoyl-[acyl-carrier-protein]: step 2/2. Functionally, catalyzes the radical-mediated insertion of two sulfur atoms into the C-6 and C-8 positions of the octanoyl moiety bound to the lipoyl domains of lipoate-dependent enzymes, thereby converting the octanoylated domains into lipoylated derivatives. This chain is Lipoyl synthase, found in Vibrio parahaemolyticus serotype O3:K6 (strain RIMD 2210633).